Consider the following 179-residue polypeptide: Large ribosomal subunit protein bL17 (179 aa).

Residues 123–179 (RTRGTDTLPDTVTDTGPDSAPDPVPGSEPGSAAGDLPDADTAPADPGESSSNQRVIR) form a disordered region. Over residues 154 to 168 (AAGDLPDADTAPADP) the composition is skewed to low complexity. Positions 170–179 (ESSSNQRVIR) are enriched in polar residues.

The protein belongs to the bacterial ribosomal protein bL17 family. In terms of assembly, part of the 50S ribosomal subunit. Contacts protein L32.

In Tropheryma whipplei (strain Twist) (Whipple's bacillus), this protein is Large ribosomal subunit protein bL17.